We begin with the raw amino-acid sequence, 180 residues long: Small ribosomal subunit protein uS4 (180 aa).

An S4 RNA-binding domain is found at 103–174 (RRLQTLVFKK…HPERMVIEEV (72 aa)).

It belongs to the universal ribosomal protein uS4 family. As to quaternary structure, part of the 30S ribosomal subunit. Contacts protein S5. The interaction surface between S4 and S5 is involved in control of translational fidelity.

Its function is as follows. One of the primary rRNA binding proteins, it binds directly to 16S rRNA where it nucleates assembly of the body of the 30S subunit. Functionally, with S5 and S12 plays an important role in translational accuracy. This Thermococcus sibiricus (strain DSM 12597 / MM 739) protein is Small ribosomal subunit protein uS4.